We begin with the raw amino-acid sequence, 548 residues long: 5-epi-aristolochene synthase 3 (548 aa).

Mg(2+)-binding residues include Asp-301, Asp-305, Asp-444, Thr-448, and Glu-452. The DDXXD motif motif lies at 301–305 (DDTFD).

The protein belongs to the terpene synthase family. In terms of assembly, monomer. Mg(2+) serves as cofactor. In terms of tissue distribution, expressed in roots, but not in shoots.

It localises to the cytoplasm. It catalyses the reaction (2E,6E)-farnesyl diphosphate = (+)-5-epi-aristolochene + diphosphate. The protein operates within secondary metabolite biosynthesis; terpenoid biosynthesis. In terms of biological role, catalyzes the cyclization of trans,trans-farnesyl diphosphate (FPP) to the bicyclic intermediate 5-epi-aristolochene, initial step in the conversion of FPP to the sesquiterpenoid antifungal phytoalexin capsidiol. Produces germacrene A as an enzyme-bound intermediate that is not released by the enzyme, but is further cyclized to produce the bicyclic 5-epi-aristolochene. In Nicotiana attenuata (Coyote tobacco), this protein is 5-epi-aristolochene synthase 3.